The chain runs to 284 residues: NAD/NADP-dependent indole-3-acetaldehyde reductase (284 aa).

Aspartate 49 is a binding site for NADPH. Catalysis depends on proton donor residues tyrosine 54 and histidine 109. NADPH contacts are provided by serine 143, glutamine 165, leucine 196, arginine 201, threonine 239, threonine 240, threonine 241, serine 242, lysine 243, and arginine 246.

The protein belongs to the aldo/keto reductase family. As to quaternary structure, monomer.

It localises to the cytoplasm. Its subcellular location is the nucleus. The catalysed reaction is indole-3-ethanol + NAD(+) = indole-3-acetaldehyde + NADH + H(+). It carries out the reaction indole-3-ethanol + NADP(+) = indole-3-acetaldehyde + NADPH + H(+). This Schizosaccharomyces pombe (strain 972 / ATCC 24843) (Fission yeast) protein is NAD/NADP-dependent indole-3-acetaldehyde reductase.